The following is a 177-amino-acid chain: MDEILVLVDKHDNPIGSAGKADIHQKGMLHRAFSIFVFDNKGNLLLQKRAATKYHSAGLWTNSCCGHPRVGEALEAAAHRRLGEEMGFDCPLKKVSSFIYHAILPNNLIEYEYDHVFIGRFDKEPIINLDEVSDYKWVNLLKLRALINNAPDVYTVWFKKIINGLSYQDIEEWQRLI.

Residues His-24 and His-30 each coordinate Mn(2+). A Nudix hydrolase domain is found at 28–160 (MLHRAFSIFV…PDVYTVWFKK (133 aa)). Residue Cys-65 is part of the active site. Cys-65 contributes to the Mg(2+) binding site. Position 67 (His-67) interacts with Mn(2+). Residue Glu-85 participates in Mg(2+) binding. Positions 110 and 112 each coordinate Mn(2+). The active site involves Glu-112.

This sequence belongs to the IPP isomerase type 1 family. Homodimer. It depends on Mg(2+) as a cofactor. Mn(2+) is required as a cofactor.

The protein localises to the cytoplasm. The enzyme catalyses isopentenyl diphosphate = dimethylallyl diphosphate. It participates in isoprenoid biosynthesis; dimethylallyl diphosphate biosynthesis; dimethylallyl diphosphate from isopentenyl diphosphate: step 1/1. Catalyzes the 1,3-allylic rearrangement of the homoallylic substrate isopentenyl (IPP) to its highly electrophilic allylic isomer, dimethylallyl diphosphate (DMAPP). In Photorhabdus laumondii subsp. laumondii (strain DSM 15139 / CIP 105565 / TT01) (Photorhabdus luminescens subsp. laumondii), this protein is Isopentenyl-diphosphate Delta-isomerase 2.